Reading from the N-terminus, the 93-residue chain is Small ribosomal subunit protein uS19 (93 aa).

A disordered region spans residues 1–23 (MPRSLKKGPFVDDHLQKKVDAEN). Basic and acidic residues predominate over residues 9–23 (PFVDDHLQKKVDAEN).

Belongs to the universal ribosomal protein uS19 family.

Protein S19 forms a complex with S13 that binds strongly to the 16S ribosomal RNA. This is Small ribosomal subunit protein uS19 from Nocardioides sp. (strain ATCC BAA-499 / JS614).